Here is a 260-residue protein sequence, read N- to C-terminus: Thiazole synthase (260 aa).

Lysine 102 (schiff-base intermediate with DXP) is an active-site residue. Residues glycine 163, 189-190 (AG), and 211-212 (NT) each bind 1-deoxy-D-xylulose 5-phosphate.

This sequence belongs to the ThiG family. In terms of assembly, homotetramer. Forms heterodimers with either ThiH or ThiS.

The protein resides in the cytoplasm. It carries out the reaction [ThiS sulfur-carrier protein]-C-terminal-Gly-aminoethanethioate + 2-iminoacetate + 1-deoxy-D-xylulose 5-phosphate = [ThiS sulfur-carrier protein]-C-terminal Gly-Gly + 2-[(2R,5Z)-2-carboxy-4-methylthiazol-5(2H)-ylidene]ethyl phosphate + 2 H2O + H(+). Its pathway is cofactor biosynthesis; thiamine diphosphate biosynthesis. In terms of biological role, catalyzes the rearrangement of 1-deoxy-D-xylulose 5-phosphate (DXP) to produce the thiazole phosphate moiety of thiamine. Sulfur is provided by the thiocarboxylate moiety of the carrier protein ThiS. In vitro, sulfur can be provided by H(2)S. The chain is Thiazole synthase from Geotalea uraniireducens (strain Rf4) (Geobacter uraniireducens).